A 267-amino-acid chain; its full sequence is 3-deoxy-manno-octulosonate cytidylyltransferase (267 aa).

It belongs to the KdsB family.

It is found in the cytoplasm. It catalyses the reaction 3-deoxy-alpha-D-manno-oct-2-ulosonate + CTP = CMP-3-deoxy-beta-D-manno-octulosonate + diphosphate. The protein operates within nucleotide-sugar biosynthesis; CMP-3-deoxy-D-manno-octulosonate biosynthesis; CMP-3-deoxy-D-manno-octulosonate from 3-deoxy-D-manno-octulosonate and CTP: step 1/1. Its pathway is bacterial outer membrane biogenesis; lipopolysaccharide biosynthesis. Its function is as follows. Activates KDO (a required 8-carbon sugar) for incorporation into bacterial lipopolysaccharide in Gram-negative bacteria. This chain is 3-deoxy-manno-octulosonate cytidylyltransferase, found in Paraburkholderia phymatum (strain DSM 17167 / CIP 108236 / LMG 21445 / STM815) (Burkholderia phymatum).